Here is a 202-residue protein sequence, read N- to C-terminus: MIALATGPRYRVPFRRRREGKTNYYKRRELIKADAPRLVARKTLNHNIAQIVDFAPHGDVTLASAHSIELRNKFGWKGHCGNTPAAYLTGYLCGLRALERGIERAVIDIGLHRPVRGSRVFAMLKGALDAGMDIPHGEEVLPPEDRIRGEHIANLARQIKEEDPEEYERRFSKYLERGLKPEELPEHFEEVKSKIEEEFGGA.

This sequence belongs to the universal ribosomal protein uL18 family. As to quaternary structure, part of the 50S ribosomal subunit. Contacts the 5S and 23S rRNAs.

In terms of biological role, this is one of the proteins that bind and probably mediate the attachment of the 5S RNA into the large ribosomal subunit, where it forms part of the central protuberance. The chain is Large ribosomal subunit protein uL18 from Methanopyrus kandleri (strain AV19 / DSM 6324 / JCM 9639 / NBRC 100938).